Here is a 303-residue protein sequence, read N- to C-terminus: 1-phosphofructokinase (303 aa).

248 to 249 is a binding site for ATP; the sequence is GD. The Proton acceptor role is filled by aspartate 249.

Belongs to the carbohydrate kinase PfkB family.

It catalyses the reaction beta-D-fructose 1-phosphate + ATP = beta-D-fructose 1,6-bisphosphate + ADP + H(+). In terms of biological role, catalyzes the ATP-dependent phosphorylation of fructose-l-phosphate to fructose-l,6-bisphosphate. This Bacillus subtilis (strain 168) protein is 1-phosphofructokinase (fruK).